The chain runs to 560 residues: Vesicular glutamate transporter 1 (560 aa).

Residues 1-63 (MEFRQEEFRK…CTCFGLPRRY (63 aa)) lie on the Cytoplasmic side of the membrane. Residues 64–84 (IIAIMSGLGFCISFGIRCNLG) traverse the membrane as a helical segment. The Extracellular segment spans residues 85-116 (VAIVSMVNNSTTHRGGHVVMQKAQFNWDPETV). Residues 117-137 (GLIHGSFFWGYIVTQIPGGFI) traverse the membrane as a helical segment. Residues 138 to 140 (CQK) lie on the Cytoplasmic side of the membrane. A helical transmembrane segment spans residues 141 to 161 (FAANRVFGFAIVATSTLNMLI). The Extracellular segment spans residues 162-169 (PSAARVHY). A helical transmembrane segment spans residues 170–190 (GCVIFVRILQGLVEGVTYPAC). Residues 191–208 (HGIWSKWAPPLERSRLAT) are Cytoplasmic-facing. A helical membrane pass occupies residues 209-229 (TAFCGSYAGAVVAMPLAGVLV). Topologically, residues 230-236 (QYSGWSS) are extracellular. The chain crosses the membrane as a helical span at residues 237-257 (VFYVYGSFGIFWYLFWLLVSY). Over 258-302 (ESPALHPSISEEERKYIEDAIGESAKLMNPVTKFNTPWRRFFTSM) the chain is Cytoplasmic. A helical transmembrane segment spans residues 303–323 (PVYAIIVANFCRSWTFYLLLI). The Extracellular portion of the chain corresponds to 324 to 341 (SQPAYFEEVFGFEISKVG). Residues 342-362 (LVSALPHLVMTIIVPIGGQIA) form a helical membrane-spanning segment. Over 363-378 (DFLRSRRIMSTTNVRK) the chain is Cytoplasmic. A helical transmembrane segment spans residues 379–399 (LMNCGGFGMEATLLLVVGYSH). At 400 to 401 (SK) the chain is on the extracellular side. Residues 402-422 (GVAISFLVLAVGFSGFAISGF) traverse the membrane as a helical segment. Topologically, residues 423–435 (NVNHLDIAPRYAS) are cytoplasmic. Residues 436-456 (ILMGISNGVGTLSGMVCPIIV) form a helical membrane-spanning segment. At 457 to 469 (GAMTKHKTREEWQ) the chain is on the extracellular side. A helical transmembrane segment spans residues 470–490 (YVFLIASLVHYGGVIFYGVFA). Residues 491–560 (SGEKQPWAEP…PRPPPPVRDY (70 aa)) lie on the Cytoplasmic side of the membrane. A disordered region spans residues 497–560 (WAEPEEMSEE…PRPPPPVRDY (64 aa)). Ser-504 carries the phosphoserine modification. A compositionally biased stretch (acidic residues) spans 520–529 (DESEMEDEAE). Pro residues-rich tracts occupy residues 531-540 (PGAPPAPPPS) and 550-560 (PPRPPPPVRDY).

Belongs to the major facilitator superfamily. Sodium/anion cotransporter family. VGLUT subfamily. As to quaternary structure, interacts with SHANK3.

The protein localises to the cytoplasmic vesicle. The protein resides in the secretory vesicle. It localises to the synaptic vesicle membrane. It is found in the cell membrane. Its subcellular location is the synapse. The protein localises to the synaptosome. The catalysed reaction is L-glutamate(out) = L-glutamate(in). It catalyses the reaction chloride(in) = chloride(out). It carries out the reaction 3 Na(+)(out) + phosphate(out) = 3 Na(+)(in) + phosphate(in). The enzyme catalyses phosphate(in) = phosphate(out). The catalysed reaction is K(+)(in) + H(+)(out) = K(+)(out) + H(+)(in). With respect to regulation, chloride channel activity is allosterically activated by lumenal H(+) and Cl(-) leading to synaptic vesicles acidification. The L-glutamate transport activity is allosterically activated by lumenal H(+) and Cl(-). The allosteric activation by H(+) efficiently prevents non-vesicular efflux across the plasma membrane, thereby restricting L-glutamate transport activity to acidic membranes such as synaptic vesicles. Multifunctional transporter that transports L-glutamate as well as multiple ions such as chloride, proton, potassium, sodium and phosphate. At the synaptic vesicle membrane, mainly functions as an uniporter which transports preferentially L-glutamate but also phosphate from the cytoplasm into synaptic vesicles at presynaptic nerve terminals of excitatory neural cells. The L-glutamate or phosphate uniporter activity is electrogenic and is driven by the proton electrochemical gradient, mainly by the electrical gradient established by the vacuolar H(+)-ATPase across the synaptic vesicle membrane. In addition, functions as a chloride channel that allows a chloride permeation through the synaptic vesicle membrane that affects the proton electrochemical gradient and promotes synaptic vesicles acidification. Moreover, may function as a K(+)/H(+) antiport allowing to maintain the electrical gradient and to decrease chemical gradient and therefore sustain vesicular glutamate uptake. The vesicular K(+)/H(+) antiport activity is electroneutral. At the plasma membrane, following exocytosis, functions as a symporter of Na(+) and phosphate from the extracellular space to the cytoplasm allowing synaptic phosphate homeostasis regulation. The symporter activity is driven by an inside negative membrane potential and is electrogenic. Is necessary for synaptic signaling of visual-evoked responses from photoreceptors. The protein is Vesicular glutamate transporter 1 of Bos taurus (Bovine).